An 866-amino-acid chain; its full sequence is N-alpha-acetyltransferase 15, NatA auxiliary subunit (866 aa).

TPR repeat units lie at residues 46–79 (GETL…DLKS), 80–113 (HVCW…DKDN), 148–184 (RASW…SPDK), and 224–257 (LAVE…NPEN). Residue Lys262 is modified to N6-acetyllysine. Position 302 is a phosphoserine (Ser302). TPR repeat units follow at residues 374-407 (LWVQ…TPTL), 409-441 (ELFL…DTAD), and 485-522 (MWFQ…TDDQ). An interaction with HYPK region spans residues 500-866 (KFGEALKKCY…AEAEELANEI (367 aa)). Residues Ser537 and Ser588 each carry the phosphoserine modification. Residues 579–594 (EHEADTANMSDKELKK) are compositionally biased toward basic and acidic residues. A disordered region spans residues 579-642 (EHEADTANMS…EEIGGPKEEL (64 aa)). Over residues 595–604 (LRNKQRRAQK) the composition is skewed to basic residues. The span at 606–621 (AQIEEEKKNAEKEKQQ) shows a compositional bias: basic and acidic residues. Residues 672-705 (IETHLFAFEIYFRKEKFLLMLQSVKRAFAIDSSH) form a TPR 8 repeat. Lys735 and Lys756 each carry N6-acetyllysine. 2 positions are modified to phosphoserine: Ser855 and Ser856.

Component of the N-terminal acetyltransferase A (NatA) complex composed of NAA10 or probably NAA11 and NAA15. Interacts with XRCC6, NAA50 and XRCC5. Associates with HYPK when in a complex with NAA10. Interaction with HYPK reduces the capacity to interact with NAA50. In terms of processing, cleaved by caspases during apoptosis.

The protein localises to the cytoplasm. The protein resides in the nucleus. In terms of biological role, auxillary subunit of the N-terminal acetyltransferase A (NatA) complex which displays alpha (N-terminal) acetyltransferase activity. The NAT activity may be important for vascular, hematopoietic and neuronal growth and development. Required to control retinal neovascularization in adult ocular endothelial cells. In complex with XRCC6 and XRCC5 (Ku80), up-regulates transcription from the osteocalcin promoter. The protein is N-alpha-acetyltransferase 15, NatA auxiliary subunit (NAA15) of Pongo abelii (Sumatran orangutan).